Reading from the N-terminus, the 207-residue chain is SPRY domain-containing protein 4 (207 aa).

A B30.2/SPRY domain is found at 12-207; it reads YRWGTKRWGV…HSGLEVPKGL (196 aa). Residues K53 and K130 each carry the N6-acetyllysine modification. At K139 the chain carries N6-succinyllysine.

This chain is SPRY domain-containing protein 4 (Spryd4), found in Mus musculus (Mouse).